We begin with the raw amino-acid sequence, 388 residues long: Succinate--CoA ligase [ADP-forming] subunit beta (388 aa).

The region spanning 9 to 244 (KQLFAEFGLP…PSQEDEREAH (236 aa)) is the ATP-grasp domain. Residues K46, 53–55 (GRG), E99, S102, and E107 contribute to the ATP site. Residues N199 and D213 each contribute to the Mg(2+) site. Residues N264 and 321 to 323 (GIV) contribute to the substrate site.

It belongs to the succinate/malate CoA ligase beta subunit family. As to quaternary structure, heterotetramer of two alpha and two beta subunits. The cofactor is Mg(2+).

It carries out the reaction succinate + ATP + CoA = succinyl-CoA + ADP + phosphate. The enzyme catalyses GTP + succinate + CoA = succinyl-CoA + GDP + phosphate. Its pathway is carbohydrate metabolism; tricarboxylic acid cycle; succinate from succinyl-CoA (ligase route): step 1/1. In terms of biological role, succinyl-CoA synthetase functions in the citric acid cycle (TCA), coupling the hydrolysis of succinyl-CoA to the synthesis of either ATP or GTP and thus represents the only step of substrate-level phosphorylation in the TCA. The beta subunit provides nucleotide specificity of the enzyme and binds the substrate succinate, while the binding sites for coenzyme A and phosphate are found in the alpha subunit. The polypeptide is Succinate--CoA ligase [ADP-forming] subunit beta (Vibrio atlanticus (strain LGP32) (Vibrio splendidus (strain Mel32))).